A 262-amino-acid polypeptide reads, in one-letter code: Translation initiation factor 2 subunit alpha (262 aa).

The S1 motif domain occupies 15–86 (GELVVGTVHK…RKGHVDVSMK (72 aa)).

It belongs to the eIF-2-alpha family. Heterotrimer composed of an alpha, a beta and a gamma chain.

EIF-2 functions in the early steps of protein synthesis by forming a ternary complex with GTP and initiator tRNA. The polypeptide is Translation initiation factor 2 subunit alpha (eif2a) (Methanothermobacter thermautotrophicus (strain ATCC 29096 / DSM 1053 / JCM 10044 / NBRC 100330 / Delta H) (Methanobacterium thermoautotrophicum)).